Here is a 1270-residue protein sequence, read N- to C-terminus: DNA-directed RNA polymerase subunit beta (1270 aa).

This sequence belongs to the RNA polymerase beta chain family. The RNAP catalytic core consists of 2 alpha, 1 beta, 1 beta' and 1 omega subunit. When a sigma factor is associated with the core the holoenzyme is formed, which can initiate transcription.

It catalyses the reaction RNA(n) + a ribonucleoside 5'-triphosphate = RNA(n+1) + diphosphate. In terms of biological role, DNA-dependent RNA polymerase catalyzes the transcription of DNA into RNA using the four ribonucleoside triphosphates as substrates. The protein is DNA-directed RNA polymerase subunit beta of Flavobacterium psychrophilum (strain ATCC 49511 / DSM 21280 / CIP 103535 / JIP02/86).